Reading from the N-terminus, the 200-residue chain is Small ribosomal subunit protein eS8B (200 aa).

The tract at residues 1-41 (MGITRDSRHKRSATGAKRAQYRKKRKFELGRQPSNTRIGPK) is disordered. Phosphoserine occurs at positions 62 and 99. The tract at residues 124–145 (KGKKATATPTPKSKHVQRKHSA) is disordered. The segment covering 135-145 (KSKHVQRKHSA) has biased composition (basic residues). 3 positions are modified to phosphoserine: serine 150, serine 154, and serine 171.

The protein belongs to the eukaryotic ribosomal protein eS8 family. Component of the small ribosomal subunit (SSU). Mature yeast ribosomes consist of a small (40S) and a large (60S) subunit. The 40S small subunit contains 1 molecule of ribosomal RNA (18S rRNA) and at least 33 different proteins. The large 60S subunit contains 3 rRNA molecules (25S, 5.8S and 5S rRNA) and at least 46 different proteins.

The protein resides in the cytoplasm. In terms of biological role, component of the ribosome, a large ribonucleoprotein complex responsible for the synthesis of proteins in the cell. The small ribosomal subunit (SSU) binds messenger RNAs (mRNAs) and translates the encoded message by selecting cognate aminoacyl-transfer RNA (tRNA) molecules. The large subunit (LSU) contains the ribosomal catalytic site termed the peptidyl transferase center (PTC), which catalyzes the formation of peptide bonds, thereby polymerizing the amino acids delivered by tRNAs into a polypeptide chain. The nascent polypeptides leave the ribosome through a tunnel in the LSU and interact with protein factors that function in enzymatic processing, targeting, and the membrane insertion of nascent chains at the exit of the ribosomal tunnel. In Schizosaccharomyces pombe (strain 972 / ATCC 24843) (Fission yeast), this protein is Small ribosomal subunit protein eS8B (rps802).